Reading from the N-terminus, the 230-residue chain is Large ribosomal subunit protein uL1 (230 aa).

It belongs to the universal ribosomal protein uL1 family. As to quaternary structure, part of the 50S ribosomal subunit.

Its function is as follows. Binds directly to 23S rRNA. The L1 stalk is quite mobile in the ribosome, and is involved in E site tRNA release. Protein L1 is also a translational repressor protein, it controls the translation of the L11 operon by binding to its mRNA. The polypeptide is Large ribosomal subunit protein uL1 (Lactobacillus gasseri (strain ATCC 33323 / DSM 20243 / BCRC 14619 / CIP 102991 / JCM 1131 / KCTC 3163 / NCIMB 11718 / NCTC 13722 / AM63)).